Consider the following 163-residue polypeptide: NADH-quinone oxidoreductase subunit I (163 aa).

4Fe-4S ferredoxin-type domains are found at residues 54-84 (LRRYPNGEERCIACKLCEAVCPALAITIESD) and 94-123 (TRYDIDLTKCIFCGFCEEACPVDAVVETPI). Cys64, Cys67, Cys70, Cys74, Cys103, Cys106, Cys109, and Cys113 together coordinate [4Fe-4S] cluster.

It belongs to the complex I 23 kDa subunit family. NDH-1 is composed of 14 different subunits. Subunits NuoA, H, J, K, L, M, N constitute the membrane sector of the complex. The cofactor is [4Fe-4S] cluster.

The protein resides in the cell inner membrane. It carries out the reaction a quinone + NADH + 5 H(+)(in) = a quinol + NAD(+) + 4 H(+)(out). In terms of biological role, NDH-1 shuttles electrons from NADH, via FMN and iron-sulfur (Fe-S) centers, to quinones in the respiratory chain. The immediate electron acceptor for the enzyme in this species is believed to be ubiquinone. Couples the redox reaction to proton translocation (for every two electrons transferred, four hydrogen ions are translocated across the cytoplasmic membrane), and thus conserves the redox energy in a proton gradient. This Cupriavidus pinatubonensis (strain JMP 134 / LMG 1197) (Cupriavidus necator (strain JMP 134)) protein is NADH-quinone oxidoreductase subunit I.